The primary structure comprises 429 residues: UDP-N-acetylglucosamine 1-carboxyvinyltransferase (429 aa).

22-23 serves as a coordination point for phosphoenolpyruvate; sequence KN. Residue Arg-102 participates in UDP-N-acetyl-alpha-D-glucosamine binding. Cys-126 serves as the catalytic Proton donor. The residue at position 126 (Cys-126) is a 2-(S-cysteinyl)pyruvic acid O-phosphothioketal. UDP-N-acetyl-alpha-D-glucosamine-binding positions include 131–135, Asp-316, and Ile-338; that span reads RPVDL.

The protein belongs to the EPSP synthase family. MurA subfamily.

Its subcellular location is the cytoplasm. The catalysed reaction is phosphoenolpyruvate + UDP-N-acetyl-alpha-D-glucosamine = UDP-N-acetyl-3-O-(1-carboxyvinyl)-alpha-D-glucosamine + phosphate. It participates in cell wall biogenesis; peptidoglycan biosynthesis. In terms of biological role, cell wall formation. Adds enolpyruvyl to UDP-N-acetylglucosamine. This Methylorubrum populi (strain ATCC BAA-705 / NCIMB 13946 / BJ001) (Methylobacterium populi) protein is UDP-N-acetylglucosamine 1-carboxyvinyltransferase.